We begin with the raw amino-acid sequence, 241 residues long: Corrinoid adenosyltransferase MMAB (241 aa).

The transit peptide at 1–26 (MAVWGPGGRLGLRGCLGARKLLCPRF) directs the protein to the mitochondrion. The interval 27 to 69 (QSRGPQGVEDGDRPQPSSKTPKVPKIYTKTGDKGFSSTFTGER) is disordered. Residues 54 to 63 (TKTGDKGFSS) and Lys-72 each bind ATP. Ser-128 bears the Phosphoserine mark. Residue 184 to 188 (RRAER) coordinates ATP. Lys-205 carries the post-translational modification N6-succinyllysine. Asn-208 contributes to the ATP binding site. Lys-224 is subject to N6-acetyllysine; alternate. At Lys-224 the chain carries N6-succinyllysine; alternate.

It belongs to the Cob(I)alamin adenosyltransferase family. Homotrimer.

The protein resides in the mitochondrion. It carries out the reaction cob(I)alamin-[corrinoid adenosyltransferase] + ATP = apo-[corrinoid adenosyltransferase] + adenosylcob(III)alamin + triphosphate. In terms of biological role, converts cob(I)alamin to adenosylcobalamin (adenosylcob(III)alamin), a coenzyme for methylmalonyl-CoA mutase, therefore participates in the final step of the vitamin B12 conversion. Generates adenosylcobalamin (AdoCbl) and directly delivers the cofactor to MUT in a transfer that is stimulated by ATP-binding to MMAB and gated by MMAA. The polypeptide is Corrinoid adenosyltransferase MMAB (Bos taurus (Bovine)).